The sequence spans 75 residues: Small ribosomal subunit protein bS18 (75 aa).

Basic residues predominate over residues 1–11 (MAAKPFFRRRK). The interval 1–21 (MAAKPFFRRRKTDPFEGENAP) is disordered.

The protein belongs to the bacterial ribosomal protein bS18 family. Part of the 30S ribosomal subunit. Forms a tight heterodimer with protein bS6.

Its function is as follows. Binds as a heterodimer with protein bS6 to the central domain of the 16S rRNA, where it helps stabilize the platform of the 30S subunit. This chain is Small ribosomal subunit protein bS18, found in Jannaschia sp. (strain CCS1).